The sequence spans 198 residues: Large ribosomal subunit protein eL19 (198 aa).

Disordered stretches follow at residues 66–85 (YEEA…RGTA) and 150–177 (KRAK…EERQ). Residues 71–83 (RKGRHTGYGKRRG) are compositionally biased toward basic residues. The segment covering 160 to 177 (QARRDKNKESRKRREERQ) has biased composition (basic and acidic residues).

Belongs to the eukaryotic ribosomal protein eL19 family.

In Caenorhabditis elegans, this protein is Large ribosomal subunit protein eL19 (rpl-19).